A 22-amino-acid chain; its full sequence is Peptide PGLa-B1 (22 aa).

Position 22 is a leucine amide (Leu22).

Expressed by the skin glands.

The protein localises to the secreted. In terms of biological role, has antibacterial and antifungal activity. In Xenopus borealis (Kenyan clawed frog), this protein is Peptide PGLa-B1.